Here is a 242-residue protein sequence, read N- to C-terminus: Hairy and enhancer of split-related protein HELT (242 aa).

Residues 10 to 65 enclose the bHLH domain; sequence RTPVSHKVIEKRRRDRINRCLNELGKTVPMALAKQSSGKLEKAEILEMTVQYLRAL. Lys-48 carries the N6-acetyllysine modification. The Orange domain maps to 87-122; it reads FHYGYHECMKNLVHYLTTVERMETKDTKYARILAFL.

It belongs to the HEY family. In terms of assembly, self-associates. Interacts with HES5 and HEY2.

Its subcellular location is the nucleus. Transcriptional repressor which binds preferentially to the canonical E box sequence 5'-CACGCG-3'. This chain is Hairy and enhancer of split-related protein HELT (HELT), found in Homo sapiens (Human).